A 464-amino-acid chain; its full sequence is Argininosuccinate lyase (464 aa).

Belongs to the lyase 1 family. Argininosuccinate lyase subfamily.

It is found in the cytoplasm. It carries out the reaction 2-(N(omega)-L-arginino)succinate = fumarate + L-arginine. Its pathway is amino-acid biosynthesis; L-arginine biosynthesis; L-arginine from L-ornithine and carbamoyl phosphate: step 3/3. This is Argininosuccinate lyase from Pseudomonas putida (strain W619).